The primary structure comprises 405 residues: MKRTIIMMLDSFGVGAAHDAEAFGDVGSNTFGHIAKACAEGKANDGREGPLKLPNLARLGLGHASKESTGEFPAGFGDDVEVIGAYGHADELSSGKDTPSGHWEMAGVPVLYEWGYFSELTNSFPQALTDKILARAGLTEFLGNCHSSGTVILDELGEEHMRTGKPIFYTSADSVFQIACHEESFGLEKLYELCIIAREELADYNIGRVIARPFVGTGPGSFERTGNRRDYAVEPPAPTVLDKLKAAGGEVVSVGKIADIYAHCGITKKVKATGLEALFDATLEQVKLAGDNTIVFTNFVDFDSHYGHRRDVAGYARSLEYFDSRLPEILALLDEDDFLLLTADHGCDPTWPGSDHTRERVPVLAYGAGLEAGSLGLRSSFADMGQSIASYFKLEPMEYGESFIR.

Mn(2+)-binding residues include Asp10, Asp303, His308, Asp344, His345, and His356.

The protein belongs to the phosphopentomutase family. Requires Mn(2+) as cofactor.

The protein localises to the cytoplasm. It catalyses the reaction 2-deoxy-alpha-D-ribose 1-phosphate = 2-deoxy-D-ribose 5-phosphate. The enzyme catalyses alpha-D-ribose 1-phosphate = D-ribose 5-phosphate. The protein operates within carbohydrate degradation; 2-deoxy-D-ribose 1-phosphate degradation; D-glyceraldehyde 3-phosphate and acetaldehyde from 2-deoxy-alpha-D-ribose 1-phosphate: step 1/2. Its function is as follows. Isomerase that catalyzes the conversion of deoxy-ribose 1-phosphate (dRib-1-P) and ribose 1-phosphate (Rib-1-P) to deoxy-ribose 5-phosphate (dRib-5-P) and ribose 5-phosphate (Rib-5-P), respectively. In Shewanella pealeana (strain ATCC 700345 / ANG-SQ1), this protein is Phosphopentomutase.